Consider the following 311-residue polypeptide: Pyrimidine-specific ribonucleoside hydrolase RihA (311 aa).

Residue His-240 is part of the active site.

It belongs to the IUNH family. RihA subfamily.

Hydrolyzes cytidine or uridine to ribose and cytosine or uracil, respectively. The sequence is that of Pyrimidine-specific ribonucleoside hydrolase RihA from Klebsiella pneumoniae (strain 342).